Here is a 305-residue protein sequence, read N- to C-terminus: MLMVAALLSWFLVGLFIRASKARGWGQPVRKDGPQTHLVKEGTPTAGGVAFVLAMALVFFPLYLSGHAGGERELLIMLTALAMGVVGGVDDWLKIQSRMRGHGKKELLAREKFPLQFLVALVFAWLAAPLASHELVPSLGPVMDVVLIALVMVGSVNAFNFTDGLDGLLGGVAIIVLLPLLALSPVSALLVAVLLGFLWFNAHPARVFMGDMGSHAIGAVAAGAYILYADVWLLPIAAIIPVVAVLSVMIQVISFKTRGKRIFRMSPIQHHFELSGWPETHVTIRFWVITAVATAAVWWLLGARP.

9 helical membrane-spanning segments follow: residues 1–21 (MLMVAALLSWFLVGLFIRASK), 46–66 (AGGVAFVLAMALVFFPLYLSG), 73–93 (ELLIMLTALAMGVVGGVDDWL), 113–133 (FPLQFLVALVFAWLAAPLASH), 139–159 (LGPVMDVVLIALVMVGSVNAF), 174–194 (IIVLLPLLALSPVSALLVAVL), 207–227 (VFMGDMGSHAIGAVAAGAYIL), 233–253 (LLPIAAIIPVVAVLSVMIQVI), and 282–302 (VTIRFWVITAVATAAVWWLLG).

It belongs to the glycosyltransferase 4 family. MraY subfamily. The cofactor is Mg(2+).

It is found in the cell membrane. The catalysed reaction is UDP-N-acetyl-alpha-D-muramoyl-L-alanyl-gamma-D-glutamyl-meso-2,6-diaminopimeloyl-D-alanyl-D-alanine + di-trans,octa-cis-undecaprenyl phosphate = di-trans,octa-cis-undecaprenyl diphospho-N-acetyl-alpha-D-muramoyl-L-alanyl-D-glutamyl-meso-2,6-diaminopimeloyl-D-alanyl-D-alanine + UMP. The protein operates within cell wall biogenesis; peptidoglycan biosynthesis. Its function is as follows. Catalyzes the initial step of the lipid cycle reactions in the biosynthesis of the cell wall peptidoglycan: transfers peptidoglycan precursor phospho-MurNAc-pentapeptide from UDP-MurNAc-pentapeptide onto the lipid carrier undecaprenyl phosphate, yielding undecaprenyl-pyrophosphoryl-MurNAc-pentapeptide, known as lipid I. This chain is Phospho-N-acetylmuramoyl-pentapeptide-transferase, found in Deinococcus deserti (strain DSM 17065 / CIP 109153 / LMG 22923 / VCD115).